The chain runs to 322 residues: Zinc finger C2HC domain-containing protein CBG14627 (322 aa).

2 C2HC/C3H-type zinc fingers span residues 9-38 (PVYP…LATL) and 119-148 (DYVQ…QTTR). Zn(2+) contacts are provided by Cys-13, Cys-16, His-28, Cys-32, Cys-123, Cys-126, His-138, and Cys-142. Positions 144–322 (EQTTRKQGGK…SRNNSRSRIF (179 aa)) are disordered. A compositionally biased stretch (polar residues) spans 148-168 (RKQGGKSSAGNRGLTSNNYRS). Residues 171–219 (SKHEGRKQESSSRNGSAERKTTTRGRDGSLSRARRDDSNDLTNRRKSLE) show a composition bias toward basic and acidic residues. The segment covering 220–238 (TRSQLTTGQANNRTTSLSA) has biased composition (polar residues). Over residues 278 to 294 (TTTTASASRSGSGSSSR) the composition is skewed to low complexity. Basic and acidic residues predominate over residues 296–305 (RTRDESRESR). Residues 311 to 322 (SNSRNNSRSRIF) show a composition bias toward low complexity.

The protein belongs to the ZC2HC1 family. The cofactor is Zn(2+).

The protein is Zinc finger C2HC domain-containing protein CBG14627 of Caenorhabditis briggsae.